Reading from the N-terminus, the 336-residue chain is Heme A synthase (336 aa).

Transmembrane regions (helical) follow at residues 5 to 25 (LTRW…VGGI), 92 to 112 (GRAT…KGII), 117 to 137 (ILSY…GWYM), 153 to 173 (LAFH…KLVK), and 191 to 211 (LIFS…GALV). His-255 contacts heme. 3 consecutive transmembrane segments (helical) span residues 257-277 (LGAY…LKVK), 284-304 (VAFY…ITLL), and 307-327 (VPII…SVVI). His-315 is a binding site for heme.

It belongs to the COX15/CtaA family. Type 2 subfamily. Interacts with CtaB. The cofactor is heme b.

It is found in the cell membrane. The catalysed reaction is Fe(II)-heme o + 2 A + H2O = Fe(II)-heme a + 2 AH2. The protein operates within porphyrin-containing compound metabolism; heme A biosynthesis; heme A from heme O: step 1/1. Functionally, catalyzes the conversion of heme O to heme A by two successive hydroxylations of the methyl group at C8. The first hydroxylation forms heme I, the second hydroxylation results in an unstable dihydroxymethyl group, which spontaneously dehydrates, resulting in the formyl group of heme A. In Rickettsia bellii (strain OSU 85-389), this protein is Heme A synthase.